We begin with the raw amino-acid sequence, 463 residues long: Exodeoxyribonuclease 7 large subunit (463 aa).

This sequence belongs to the XseA family. As to quaternary structure, heterooligomer composed of large and small subunits.

It localises to the cytoplasm. The catalysed reaction is Exonucleolytic cleavage in either 5'- to 3'- or 3'- to 5'-direction to yield nucleoside 5'-phosphates.. Its function is as follows. Bidirectionally degrades single-stranded DNA into large acid-insoluble oligonucleotides, which are then degraded further into small acid-soluble oligonucleotides. The chain is Exodeoxyribonuclease 7 large subunit from Klebsiella pneumoniae (strain 342).